We begin with the raw amino-acid sequence, 175 residues long: Protein tyrosine phosphatase PRL-1 (175 aa).

One can recognise a Tyrosine-protein phosphatase domain in the interval 15-172; it reads KPSRVLFHFL…YKRRHQGAGC (158 aa). Cys-53 and Cys-114 are joined by a disulfide. Asp-76 functions as the Proton donor in the catalytic mechanism. Cys-114 (phosphocysteine intermediate) is an active-site residue. 116–120 is a binding site for substrate; the sequence is AGLGR. A Cysteine methyl ester modification is found at Cys-172. A lipid anchor (S-farnesyl cysteine) is attached at Cys-172. The propeptide at 173 to 175 is removed in mature form; the sequence is VIM.

This sequence belongs to the protein-tyrosine phosphatase family.

It is found in the cytoplasm. Its subcellular location is the mitochondrion matrix. It localises to the kinetoplast. The protein localises to the secreted. The protein resides in the extracellular exosome. It carries out the reaction O-phospho-L-tyrosyl-[protein] + H2O = L-tyrosyl-[protein] + phosphate. Activated in a reduced environment which promotes the reduction of the disulfide bond between the regulatory Cys-53 and catalytic Cys-114 residues. Its function is as follows. Has protein tyrosine phosphatase activity and may act as a virulence factor to support intracellular survival in host macrophages. This Leishmania major protein is Protein tyrosine phosphatase PRL-1.